A 106-amino-acid chain; its full sequence is Small ribosomal subunit protein uS10 (106 aa).

It belongs to the universal ribosomal protein uS10 family. Part of the 30S ribosomal subunit.

Its function is as follows. Involved in the binding of tRNA to the ribosomes. The protein is Small ribosomal subunit protein uS10 of Pyrobaculum neutrophilum (strain DSM 2338 / JCM 9278 / NBRC 100436 / V24Sta) (Thermoproteus neutrophilus).